The sequence spans 394 residues: Purine ribonucleoside efflux pump NepI (394 aa).

Residues 1–21 (MSEFIAENRGADAITRPNWSA) are Cytoplasmic-facing. Residues 22–42 (VFSVAFCVACLIIVEFLPVSL) form a helical membrane-spanning segment. Residues 43–54 (LTPMAQDLGISE) lie on the Periplasmic side of the membrane. A helical membrane pass occupies residues 55–75 (GVAGQSVTVTAFVAMFASLFI). At 76–85 (TQTIQATDRR) the chain is on the cytoplasmic side. Residues 86 to 106 (YVVILFAVLLTISCLLVSFAN) form a helical membrane-spanning segment. S107 is a topological domain (periplasmic). The chain crosses the membrane as a helical span at residues 108-128 (FSLLLIGRACLGLALGGFWAM). The Cytoplasmic segment spans residues 129–147 (SASLTMRLVPPRTVPKALS). The chain crosses the membrane as a helical span at residues 148 to 168 (VIFGAVSIALVIAAPLGSFLG). At 169–175 (ELIGWRN) the chain is on the periplasmic side. The chain crosses the membrane as a helical span at residues 176–196 (VFNAAAVMGVLCIFWIIKSLP). Residues 197–215 (SLPGKPSHQKQNTFRLLQR) are Cytoplasmic-facing. The chain crosses the membrane as a helical span at residues 216–236 (PGVMAGMIAIFMSFAGQFAFF). Topologically, residues 237–255 (TYIRPVYMNLAGFGVDGLT) are periplasmic. A helical transmembrane segment spans residues 256-276 (LVLLSFGIASFIGTSLSSFIL). Topologically, residues 277 to 281 (KRSVK) are cytoplasmic. Residues 282-302 (LALAGAPLILAVSALVLTLCG) traverse the membrane as a helical segment. Topologically, residues 303-305 (SDK) are periplasmic. The helical transmembrane segment at 306 to 326 (IVATGVAIIWGLTFALVPVGW) threads the bilayer. The Cytoplasmic segment spans residues 327–343 (STWSTRSLADQAEKAGS). The chain crosses the membrane as a helical span at residues 344 to 364 (IQVAVIQLANTCGAAIGGYAL). At 365 to 366 (DN) the chain is on the periplasmic side. A helical transmembrane segment spans residues 367-387 (IGLTSPLMLSGTLMLLTALLV). The Cytoplasmic portion of the chain corresponds to 388 to 394 (TAKVKMK).

This sequence belongs to the major facilitator superfamily. DHA1 family. NepI (TC 2.A.1.2.26) subfamily.

It is found in the cell inner membrane. The enzyme catalyses inosine(in) + H(+)(out) = inosine(out) + H(+)(in). It carries out the reaction guanosine(in) + H(+)(out) = guanosine(out) + H(+)(in). Involved in the efflux of purine ribonucleosides, such as inosine and guanosine. This chain is Purine ribonucleoside efflux pump NepI, found in Shigella dysenteriae serotype 1 (strain Sd197).